We begin with the raw amino-acid sequence, 466 residues long: Argininosuccinate lyase 1 (466 aa).

It belongs to the lyase 1 family. Argininosuccinate lyase subfamily.

Its subcellular location is the cytoplasm. The catalysed reaction is 2-(N(omega)-L-arginino)succinate = fumarate + L-arginine. It participates in amino-acid biosynthesis; L-arginine biosynthesis; L-arginine from L-ornithine and carbamoyl phosphate: step 3/3. This chain is Argininosuccinate lyase 1, found in Mesorhizobium japonicum (strain LMG 29417 / CECT 9101 / MAFF 303099) (Mesorhizobium loti (strain MAFF 303099)).